A 541-amino-acid polypeptide reads, in one-letter code: MTGEKIRSLRRDHKPSKEDGDVLEPCEEEATAALGGAFTGGRSGPGGSGKGGKACHKIFSHHHRLQLKAPAVPGPGVPAPPQHNAVTATCPAPACLGGSNPALVADGGGCPSLYPVHECVFKGDVRRLSSLIRTHNIGQKDNHGNTPLHLAVMLGNKECAHLLLAHNAPVKVKNAQGWSPLAEAISYGDRQMITALLRKLKQQSRESVGEKRPRLLKALKELGDFYLELHWDFQSWVPLLSRILPSDACKIYKQGINIRLDTTLIDFTDMKCQRGDLSFIFNGDAAPSESFVVLDNEQKVYQRIHHEESEMETEEEVDILMSSDIYSATLSTKSISFTRAQTGWLFREDKTERVGNFLADFYLVNGLVLESRKRREHLSEEDILRNKAIMESLSKGGSLAEQSFEPVRRQSLTPPPQNTITWEEYISAENGKAPHLGRELVCKESKKTFKATVAMSQEFPLGIESLLNVLEVIAPFKHFNKLREFVQMKLPPGFPVKLDIPVFPTITATVTFQEFRCDEFDGSIFAIPEDYKEDPSRFPDL.

The span at 1–20 (MTGEKIRSLRRDHKPSKEDG) shows a compositional bias: basic and acidic residues. A disordered region spans residues 1–53 (MTGEKIRSLRRDHKPSKEDGDVLEPCEEEATAALGGAFTGGRSGPGGSGKGGK). Positions 21-30 (DVLEPCEEEA) are enriched in acidic residues. Over residues 37 to 52 (AFTGGRSGPGGSGKGG) the composition is skewed to gly residues. ANK repeat units lie at residues 111-142 (PSLY…QKDN), 143-172 (HGNT…PVKV), and 176-205 (QGWS…QQSR). S411 bears the Phosphoserine mark.

It localises to the endoplasmic reticulum membrane. Acts as a molecular chaperone for G protein-coupled receptors, regulating their biogenesis and exit from the ER. This chain is Ankyrin repeat domain-containing protein 13C (Ankrd13c), found in Mus musculus (Mouse).